Reading from the N-terminus, the 466-residue chain is Cysteine--tRNA ligase (466 aa).

C29 contributes to the Zn(2+) binding site. The 'HIGH' region signature appears at 31–41 (PTVYDFAHIGN). C210, H235, and E239 together coordinate Zn(2+). Residues 267–271 (KMSKS) carry the 'KMSKS' region motif. ATP is bound at residue K270.

Belongs to the class-I aminoacyl-tRNA synthetase family. Monomer. Zn(2+) serves as cofactor.

The protein localises to the cytoplasm. The catalysed reaction is tRNA(Cys) + L-cysteine + ATP = L-cysteinyl-tRNA(Cys) + AMP + diphosphate. The protein is Cysteine--tRNA ligase of Solibacter usitatus (strain Ellin6076).